A 361-amino-acid chain; its full sequence is Zinc transporter ZIP13 (361 aa).

Over 1-6 (MPGCPC) the chain is Lumenal. A helical transmembrane segment spans residues 7-27 (PGCGMAGQRLLFLTVLALELL). At 28-68 (ERAGGSQPALRSLGAAAACRLDSKESESWGALLSGERLDTW) the chain is on the cytoplasmic side. Residues 69-89 (ICSLLGSLMVGLSGVFPLLVI) form a helical membrane-spanning segment. The Lumenal segment spans residues 90–108 (PLEMGTMLQSEAGAWRLKQ). Residues 109–129 (LLSFALGGLLGNVFLHLLPEA) form a helical membrane-spanning segment. At 130 to 150 (WAYTCNISPGVEGQSLQRQQQ) the chain is on the cytoplasmic side. The chain crosses the membrane as a helical span at residues 151–171 (LGLWVIAGFLTFLALEKMFLN). Over 172 to 233 (CKEEDPSQAP…TIDNFTHGLA (62 aa)) the chain is Lumenal. Residues 234 to 254 (VAASFLVSKKIGLLTTMAILL) form a helical membrane-spanning segment. The XEXPHE-motif motif lies at 255-260 (HEIPHE). At 255–276 (HEIPHEVGDFAILLRAGFDRWT) the chain is on the cytoplasmic side. Residues 277 to 297 (AAKLQFSTALGGLLGACFAIC) form a helical membrane-spanning segment. Residues 298 to 307 (TQSPKGVEET) lie on the Lumenal side of the membrane. Residues 308–328 (VVWTLPFTSGGFLYVALVNVL) traverse the membrane as a helical segment. Residues 329–340 (PDLLEEDDPWHL) lie on the Cytoplasmic side of the membrane. A helical transmembrane segment spans residues 341 to 361 (NPPLPTGTPCSRCCCSAPVSW).

The protein belongs to the ZIP transporter (TC 2.A.5) family. As to quaternary structure, homodimer.

Its subcellular location is the golgi apparatus membrane. It is found in the cytoplasmic vesicle membrane. The protein resides in the endoplasmic reticulum membrane. The enzyme catalyses Zn(2+)(in) = Zn(2+)(out). Functions as a zinc transporter transporting Zn(2+) from the Golgi apparatus to the cytosol and thus influences the zinc level at least in areas of the cytosol. May regulate beige adipocyte differentiation. In Rattus norvegicus (Rat), this protein is Zinc transporter ZIP13.